Here is a 71-residue protein sequence, read N- to C-terminus: Small ribosomal subunit protein bS18 (71 aa).

This sequence belongs to the bacterial ribosomal protein bS18 family. Part of the 30S ribosomal subunit. Forms a tight heterodimer with protein bS6.

Binds as a heterodimer with protein bS6 to the central domain of the 16S rRNA, where it helps stabilize the platform of the 30S subunit. This is Small ribosomal subunit protein bS18 from Microcystis aeruginosa (strain NIES-843 / IAM M-2473).